Here is a 127-residue protein sequence, read N- to C-terminus: Small ribosomal subunit protein uS13 (127 aa).

The tract at residues 90-127 (RRHRQGLPVRGQRTRTNARTRRGRRVTVAGKKKAPSKK) is disordered. Over residues 101–127 (QRTRTNARTRRGRRVTVAGKKKAPSKK) the composition is skewed to basic residues.

This sequence belongs to the universal ribosomal protein uS13 family. As to quaternary structure, part of the 30S ribosomal subunit. Forms a loose heterodimer with protein S19. Forms two bridges to the 50S subunit in the 70S ribosome.

Located at the top of the head of the 30S subunit, it contacts several helices of the 16S rRNA. In the 70S ribosome it contacts the 23S rRNA (bridge B1a) and protein L5 of the 50S subunit (bridge B1b), connecting the 2 subunits; these bridges are implicated in subunit movement. Contacts the tRNAs in the A and P-sites. The protein is Small ribosomal subunit protein uS13 of Rippkaea orientalis (strain PCC 8801 / RF-1) (Cyanothece sp. (strain PCC 8801)).